Consider the following 497-residue polypeptide: Envelope glycoprotein E (497 aa).

Topologically, residues 1–398 (MCVFQILIIV…GTIIYDILLT (398 aa)) are virion surface. Asn-60, Asn-133, Asn-148, Asn-203, Asn-277, Asn-366, and Asn-388 each carry an N-linked (GlcNAc...) asparagine; by host glycan. A helical transmembrane segment spans residues 399-419 (SLSIGAIIIVIVGGVCIAILI). The Intravirion segment spans residues 420–497 (RRRRRRRTRG…KIRKRLDLYH (78 aa)).

Belongs to the alphaherpesvirinae glycoprotein E family. In terms of assembly, interacts with gI. Post-translationally, phosphorylated within the acidic cluster. Phosphorylation determines whether endocytosed viral gE traffics to the trans-Golgi network or recycles to the cell membrane.

It localises to the virion membrane. The protein resides in the host cell membrane. The protein localises to the host cell junction. It is found in the host Golgi apparatus membrane. Its subcellular location is the host endosome membrane. In epithelial cells, the heterodimer gE/gI is required for the cell-to-cell spread of the virus, by sorting nascent virions to cell junctions. Once the virus reaches the cell junctions, virus particles can spread to adjacent cells extremely rapidly through interactions with cellular receptors that accumulate at these junctions. Implicated in basolateral spread in polarized cells. In neuronal cells, gE/gI is essential for the anterograde spread of the infection throughout the host nervous system. Together with US9, the heterodimer gE/gI is involved in the sorting and transport of viral structural components toward axon tips. The sequence is that of Envelope glycoprotein E (MDV096) from Gallus gallus (Chicken).